Reading from the N-terminus, the 484-residue chain is Sodium-dependent glucose transporter 1 (484 aa).

S6 is modified (phosphoserine). 12 helical membrane passes run 40-60 (WFTT…AAVL), 80-100 (EIFV…GVLF), 106-126 (FLLL…TPFC), 135-155 (MMSI…VLIL), 168-188 (ALHF…KLAW), 227-247 (LLWA…FLFA), 274-294 (ALLC…VTYG), 317-337 (SIFW…ATLL), 340-360 (GTMM…LVLF), 366-386 (CLWI…PSGI), 401-421 (AFIL…SGIL), and 428-448 (LPVI…LFPV).

The protein belongs to the major facilitator superfamily. As to expression, expressed in brain, liver, lung, and kidney. In kidney expressed in cortex and inner medulla, in ascending thin limbs (ATLs) and lower descending thin limbs (DTLs). Primarily expressed in the proximal tubules of the kidney.

Its subcellular location is the apical cell membrane. May function as a sodium-dependent glucose transporter. Potential channels for urea in the inner medulla of kidney. This Rattus norvegicus (Rat) protein is Sodium-dependent glucose transporter 1.